A 329-amino-acid polypeptide reads, in one-letter code: Nicotianamine synthase 8 (329 aa).

Belongs to the nicotianamine synthase (NAS)-like family. As to quaternary structure, homotrimer.

It catalyses the reaction 3 S-adenosyl-L-methionine = nicotianamine + 3 S-methyl-5'-thioadenosine + 3 H(+). In terms of biological role, synthesizes nicotianamine, a polyamine that is the first intermediate in the synthesis of the phytosiderophores of the mugineic acid type found in gramineae which serve as a sensor for the physiological iron status within the plant, and/or might be involved in the transport of iron. The protein is Nicotianamine synthase 8 (NAS8) of Hordeum vulgare (Barley).